A 325-amino-acid chain; its full sequence is Olfactory receptor 14L1 (325 aa).

At 1–43 (MAQFNKNQLIACRRNGTTTSDFNQTEVAEFFLMGFSNSWDIQI) the chain is on the extracellular side. Residues 44–64 (VHAALFFLVYLAAVIGNLLII) traverse the membrane as a helical segment. Over 65-72 (ILTTLDVH) the chain is Cytoplasmic. Residues 73 to 93 (LQTPMYFFLRNLSFLDFCYIS) traverse the membrane as a helical segment. Residues 94-117 (VTIPKSIVSSLTHDTSISFFGCAL) lie on the Extracellular side of the membrane. Residues 118 to 138 (QAFFFMDLATTEVAILTVMSY) traverse the membrane as a helical segment. Residues 139–151 (DRYMAICRPLHYE) are Cytoplasmic-facing. A helical transmembrane segment spans residues 152–172 (VIINQGVCLRMMAMSWLSGVI). The Extracellular segment spans residues 173–214 (CGFMHVIATFSLPFCGRNRIRQFFCNIPQLLSLLDPKVITIE). Residues 215-235 (IGVMVFGTSLVIISFVVITLS) traverse the membrane as a helical segment. Over 236-255 (YMYIFSVIMRIPSKEGRSKT) the chain is Cytoplasmic. A helical transmembrane segment spans residues 256 to 276 (FSTCIPHLVVVTLFMISGSIA). At 277–289 (YVKPISNSPPVLD) the chain is on the extracellular side. Residues 290–310 (VFLSAFYTVVPPTLNPVIYSL) form a helical membrane-spanning segment. The Cytoplasmic portion of the chain corresponds to 311 to 325 (RNRDMKAALRRQCGP).

This sequence belongs to the G-protein coupled receptor 1 family.

Its subcellular location is the cell membrane. Functionally, odorant receptor. The polypeptide is Olfactory receptor 14L1 (Homo sapiens (Human)).